A 320-amino-acid polypeptide reads, in one-letter code: GTP 3',8-cyclase (320 aa).

Residues 5–225 (QFGRKINYLR…IQLIKKDEKA (221 aa)) form the Radical SAM core domain. Residue arginine 14 participates in GTP binding. 2 residues coordinate [4Fe-4S] cluster: cysteine 21 and cysteine 25. S-adenosyl-L-methionine is bound at residue tyrosine 27. Cysteine 28 contributes to the [4Fe-4S] cluster binding site. A GTP-binding site is contributed by arginine 64. Position 68 (glycine 68) interacts with S-adenosyl-L-methionine. Position 95 (threonine 95) interacts with GTP. Residue serine 119 coordinates S-adenosyl-L-methionine. Position 155 (lysine 155) interacts with GTP. Position 189 (methionine 189) interacts with S-adenosyl-L-methionine. Residues cysteine 248 and cysteine 251 each contribute to the [4Fe-4S] cluster site. 253-255 (RIR) contributes to the GTP binding site. A [4Fe-4S] cluster-binding site is contributed by cysteine 265.

This sequence belongs to the radical SAM superfamily. MoaA family. Monomer and homodimer. Requires [4Fe-4S] cluster as cofactor.

It carries out the reaction GTP + AH2 + S-adenosyl-L-methionine = (8S)-3',8-cyclo-7,8-dihydroguanosine 5'-triphosphate + 5'-deoxyadenosine + L-methionine + A + H(+). It functions in the pathway cofactor biosynthesis; molybdopterin biosynthesis. Catalyzes the cyclization of GTP to (8S)-3',8-cyclo-7,8-dihydroguanosine 5'-triphosphate. The protein is GTP 3',8-cyclase of Campylobacter jejuni (strain RM1221).